Here is a 51-residue protein sequence, read N- to C-terminus: ATP synthase F(1) complex subunit epsilon, mitochondrial (51 aa).

An N6-acetyllysine; alternate mark is found at K21, K32, and K37. N6-succinyllysine; alternate is present on residues K21, K32, and K37. The residue at position 44 (K44) is an N6-acetyllysine.

The protein belongs to the eukaryotic ATPase epsilon family. In terms of assembly, component of the ATP synthase complex composed at least of ATP5F1A/subunit alpha, ATP5F1B/subunit beta, ATP5MC1/subunit c (homooctomer), MT-ATP6/subunit a, MT-ATP8/subunit 8, ATP5ME/subunit e, ATP5MF/subunit f, ATP5MG/subunit g, ATP5MK/subunit k, ATP5MJ/subunit j, ATP5F1C/subunit gamma, ATP5F1D/subunit delta, ATP5F1E/subunit epsilon, ATP5PF/subunit F6, ATP5PB/subunit b, ATP5PD/subunit d, ATP5PO/subunit OSCP. ATP synthase complex consists of a soluble F(1) head domain (subunits alpha(3) and beta(3)) - the catalytic core - and a membrane F(0) domain - the membrane proton channel (subunits c, a, 8, e, f, g, k and j). These two domains are linked by a central stalk (subunits gamma, delta, and epsilon) rotating inside the F1 region and a stationary peripheral stalk (subunits F6, b, d, and OSCP).

The protein localises to the mitochondrion. It is found in the mitochondrion inner membrane. Subunit epsilon, of the mitochondrial membrane ATP synthase complex (F(1)F(0) ATP synthase or Complex V) that produces ATP from ADP in the presence of a proton gradient across the membrane which is generated by electron transport complexes of the respiratory chain. ATP synthase complex consist of a soluble F(1) head domain - the catalytic core - and a membrane F(1) domain - the membrane proton channel. These two domains are linked by a central stalk rotating inside the F(1) region and a stationary peripheral stalk. During catalysis, ATP synthesis in the catalytic domain of F(1) is coupled via a rotary mechanism of the central stalk subunits to proton translocation. In vivo, can only synthesize ATP although its ATP hydrolase activity can be activated artificially in vitro. May be essential for the assembly of F(1) and may play an important role in the incorporation of the hydrophobic subunit c into the F(1)-c oligomer rotor of the mitochondrial ATP synthase complex. The polypeptide is ATP synthase F(1) complex subunit epsilon, mitochondrial (Bos taurus (Bovine)).